Here is a 60-residue protein sequence, read N- to C-terminus: Light-harvesting polypeptide B-885 alpha-2 chain (60 aa).

At S1–T16 the chain is on the cytoplasmic side. A helical membrane pass occupies residues V17–L37. H33 contributes to the a bacteriochlorophyll binding site. At G38–A60 the chain is on the periplasmic side.

It belongs to the antenna complex alpha subunit family. The core complex is formed by different alpha and beta chains, binding bacteriochlorophyll molecules, and arranged most probably in tetrameric structures disposed around the reaction center. The non-pigmented gamma chains may constitute additional components.

It localises to the cell inner membrane. Functionally, antenna complexes are light-harvesting systems, which transfer the excitation energy to the reaction centers. This is Light-harvesting polypeptide B-885 alpha-2 chain from Rhodocyclus tenuis (Rhodospirillum tenue).